We begin with the raw amino-acid sequence, 279 residues long: Putative pyruvate, phosphate dikinase regulatory protein (279 aa).

157-164 (GVSRTSKT) contacts ADP.

This sequence belongs to the pyruvate, phosphate/water dikinase regulatory protein family. PDRP subfamily.

The catalysed reaction is N(tele)-phospho-L-histidyl/L-threonyl-[pyruvate, phosphate dikinase] + ADP = N(tele)-phospho-L-histidyl/O-phospho-L-threonyl-[pyruvate, phosphate dikinase] + AMP + H(+). It catalyses the reaction N(tele)-phospho-L-histidyl/O-phospho-L-threonyl-[pyruvate, phosphate dikinase] + phosphate + H(+) = N(tele)-phospho-L-histidyl/L-threonyl-[pyruvate, phosphate dikinase] + diphosphate. In terms of biological role, bifunctional serine/threonine kinase and phosphorylase involved in the regulation of the pyruvate, phosphate dikinase (PPDK) by catalyzing its phosphorylation/dephosphorylation. In Lactobacillus helveticus (strain DPC 4571), this protein is Putative pyruvate, phosphate dikinase regulatory protein.